We begin with the raw amino-acid sequence, 4144 residues long: MFSSSQIPRVFLIPSRRELRLVLQLQESLSAGDRCSAAMASYQLTRGLGQECVLSSDPAVLALQTSLVFSKDFGLLVFVRKSLSIDEFRDCREEVLKFLYIFLEKIGQKITPYSLDIKTTCTSVYTKDKAAKCKIPALDLLIKLLQTLRSSRLMDEFSIGELFNKFYGELALKTKIQDTVLEKIYELLGVLAEVHPSEMINNSEKLFRAFLGELKIQMTSAIREPKLPVLAGCLKGLSSLMCNFTKSMEEDPQTSREIFDFALKAIRPQIDLKRYAVPLAGLCLFTLHASQFSTCLLDNYVSLFEVLSKWCSHTNVEMKKAAHSALESFLKQVSFMVAKDAEMHKSKLQYFMEQFYGIIRNMDSNSKDLSIAIRGYGLFAGPCKVINAKDVDFMYIELIQRCKQLFLTQIDTVDDHVYHMPSFLQSIASVLLYLDRVPEVYTPVLEHLMVAQIDSFPQYSPKMQSVCCKALVKVFLALGGKGPVLWNCISTVVHQGLIRICSKPVILQKGVESEPEEYRASGEVRTGKWKVPTYKDYLDLFRSLLSCDQMMDSLLADEAFLFVNSSLQNLNRLLYDEFVKSVLKIIEKLDLTLEKRNVGEHEDENEATGVWVIPTSDPAANLHPAKPKDFSAFINLVEFCRDILPEKHIEFFEPWVYSFAYELILQSTRLPLISGFYKLLSVAVRNAKKIKYFEGVGMKSQTQAPKDPEKYSCFALFAKFGKEVTVKMKQYKDELLASCLTFILSLPHDIIELDIRAYIPALQMAFKLGLSYTPLAEVGLNALEEWSVCICKHIIQPHYKDILPSLDGYLKTSALSDETKNSWEVSAPSQAAQKGFNQVVLKHLKKTKNISSNEALSLEEIRIRVVQMLGFLGGQINKNLLTATSSDEMMKKCVAWDREKRLSFAVPFIEMKPVIYLDVFLPRVTELALSASDRQTKVAACELLHSMVMFTLGKATQMPECGQGFPPMYQLYKRTFPALLRLACDVDQVTRQLYEPLVMQLIHWFTNNKKFESQDTVALLETILDGIVDPVDSTLRDFCGRCIREFLKWSIKQTTPQQQEKSPVNTKSLFKRLYSFALHPNAFKRLGASLAFNNIYREFREEESLVEQFVFEALVTYLESLALAHTDEKPLGTIRQCCDAIDHLRHIIEKKHVSLNKVKKRRRPRGFPPSASLCLLDMVQWLLAHCGRPQTECRHKSIELFYKFVPLLPGNKSPSLWLKDILKNKDTSFLINTFEGGGGSCDRPSGILVQPTLFHLQGPFSLRAALQWMDMLLAALECYNTFIEEKTLKAPDVLGTETQSSLWKAVAFFLDNIAMHDITAAEKCFGTGAAGHRPSPQEGERYNYSKCTIVVRIMEFTTTLLNTSPDGWKLLEEDLCNNKNFMTLLVKILCQPSSIGFNIGDVLVMNHLPDVCVNLMKALKKSPYKDTLEMCLKEKITVQSIEELCAVDLYGPDAYVDRATLASVVSACKQLHRAGVLHVVLPSQSADQRHSVGIKLLFLVYKSIAPGDEREYFPSLDPSCKRLASGLLELAFAFGGLCEHLVDLLLDTAVLSMPASGESQRNMVSFSHGEYFYSLFSEIINTELLRNLDMTVLKLMKSSVDNPKMVSAILNGMLDQSFRDRASRKQQGLKLASTILHNWKKWDSWWAKDSAPESKTAVLTLLAKILQIDSSVSFNTNHSAFPEVFTTYTSLLADSNLGLHLMGQAVILLPFFTNLTGGNLEDLEHVLEKLIVSNFPMKSEEFPVGTLRYSNYVDCMKKFLDALELSQSPVLLQLMAEILCREQQHVMEELFQSTFKKIARKSSCVTQLALLESVYRMFKRDDLLSNVTRQAFVDRSLLTLLWHCGLNALREFFGKIVVETIDVLKSRFTKLNESTFDTQITKKMGFYKMLDVMYSRLSKDDVHSKESKINQVFHGSCITEGNELTKTLIKLCYDAFTENMAGENQLLERRRLYHCAAYNCAISVICCVFTELKFYQGFLFSEKPEKNLLILENLIDLKRCYTFPIEVEVPMERRKKYIEIRKEAREAVNGDSDGPHYLSSLSYLADSSLSEEMSQFDFSTGVQSYSYGSQDPKSTHGHFRRREHKDPMVQDAVLELEMDELNQHECMATMTALIKHMQRNQILSKDEGSVPRNLPPWMKFLHDKLGNPSVSLNIRLFLAKLVINTEEVFRPYAKYWLSPLLQLVVSENNGGEGIHYMVVEIVVTVLSWTGLATPVGVPKDEVLANRLLHFLMEHVFHQKRAVFRHNLEIIKTLVECWKDCLSVPYRLIFEKFSSKDPNSKDNSVGIQLLGIVMANNLPPYDPKCGIERIKYFEALVSNMSFVKYKEVYAAAAEVLGLTLRYITERENILENVVYELVIKQLKQHQNTMEDKFIVCLNKVVKNFPPLADRFMNAVFFLLPKFHGVMKTLCLEVVLCRAEEITNIYLELKSKDFIQVMRHRDDERQKVCLDIIYKMMAKLKPVELRDLLNSVVEFISHPSPVCREQMYNILMWIHDNYRDPESQADDDSREVFKLAKDVLIQGLIDENAGLQLIIRNFWSHETRLPSNTLDRLLALNSLYSPKIEVHFLSLATDFLLEMTSLSPDYANPVFEHPLSECEFQEYTIDSDWRFRSTVLTPMFIETQASQSTLQTRTQERSLPAQGVMARQIRATQQQYDFTPTQTADGRSSFNWLTGSSIDPLVDYTVSSSDSSSSSLLFAQKRNEKSQRAPLKSVGPDFGEKKLGLPGDKVDNKAKGIDNRTEILRLRRRFIKDQEKLSLIYARKGIAEQKREKEIKSELKMKHDAQVILYRSYRQGDLPDIQIKYSSLVTPLQAVAQRDPVVAKQLFGSLFSGIIKEMDKYKTMSEKNNITQKLLQDFSHFLNSTFSFFPPFVSCIQEISCQHTDLLSLDPGSIRASCLASLQQPVGVRLLEEALLHLGPQEPPAKQFKGRMRVSPDVVRWMELAKLYRSIGEYDILRGIFSSEIGTKQITQSAIFAEARSDYSEAAKQYNEALNKEEWVDGEPTEAEKDFWELASLDCYNQLAEWKSLAYCSIVSVDNENPPDLNKMWSEPFYRETYLPYMIRSKLKLLLQGEADQSLLTFIDEAVNKDLQKALIELHYSQELSLLYILQDDIDRAKYYIENCIQIFMQNYSSIDVLLHRSRLTKLQSVQTMIEIQEFISFISRQGNLSSQAPLKRLLKSWTNRYPDARMDPVHIWDDIITNRCFFLSKIEEKLTLPLGDHSLSMDEERDSSDKMEVQEQGEEVCSLIKNCMFSMKMKMVESARKQHNFSLAMKLLKELRRESKTRDDWQVKWVHTYCRLSHSRIQGQSCLQQILSALKTVSLLAGESTSSYFSKNVLAFHDQNILLGTTYSIIANALRREPACLAEIEESRARRILDLSGSSLENAEKVIAVLYQRAFHHLSEAVRTAEEEAQPSLRGQGPVASLTDAYMTLADFCDQQLRKEEESASVTESVELQTYPGLVVDNMLKALKLHSSEARLKFPRLLQIIELYPEETLSLMTKEISSTPCWQFIGWISHMVALLDQEEAVAVQCTVEEIADNYPQAIVYPFIISSESYSFKDTSTGHKNKEFVARIKTKLDLGGVIQDFISALEQLSNPEMLFKDWTDDMKAELAKNPVSKKNIEKMYERMYAALGDLRAPGLGAFRRRFIQVFGKEFDKHFGKGGSKLPGMKLRDFGSITDSLFYKMCTDSKPPGNLKECSPWMSDFKVEFLRNELEIPGQYDGKGKPLPEYHARIAGFDERIKVMASIRKPKRIIIRGRDEKEYPLLVKGGEDLRQDQRIEQLFEVMNVLLSQDTACSQRNMQLKTYHVIPMTSRLGLIEWIENTLTLKDFLLSNMSREEKAAYTSDPKAPPCEYRDWLAKMSGKYDVGAYMSMFKAASRTETVTSFRRRESRVPADLLKRAFLKMSTGPAAFLALRSHFASSHALMCISHWILGIGDRHLNNFMVSMETGGLIGIDFGHAFGSATQFLPVPELMPFRLTRQFINLMLPMKEAGVVYSIMVHALRAFRSHSDLLTNTMDVFVKEPSFDWKNFEQKMLKKGGSWIQEINVTEKNWYPRQKIHYAKRKLAGANPAVITCDELFLGHEKALAFGDYVAVARGSKDHNIRAQQPENGLSEEAQVKCLIDQATDPNILGRTWIGWEPWM.

Residue lysine 127 is modified to N6-acetyllysine. Residues 298–333 form an HEAT 1 repeat; the sequence is DNYVSLFEVLSKWCSHTNVEMKKAAHSALESFLKQV. A phosphoserine mark is found at serine 521, serine 851, and serine 903. An HEAT 2 repeat occupies 1014–1050; the sequence is QDTVALLETILDGIVDPVDSTLRDFCGRCIREFLKWS. The residue at position 1075 (serine 1075) is a Phosphoserine. Lysine 1219 bears the N6-acetyllysine mark. The interval 1516-1551 is interaction with C1D; it reads LDPSCKRLASGLLELAFAFGGLCEHLVDLLLDTAVL. Residues 1516 to 1551 are leucine-zipper; that stretch reads LDPSCKRLASGLLELAFAFGGLCEHLVDLLLDTAVL. Residues 1736–1769 form a TPR 1 repeat; sequence PMKSEEFPVGTLRYSNYVDCMKKFLDALELSQSP. Position 1983 is an N6-acetyllysine (lysine 1983). Serine 2069 carries the post-translational modification Phosphoserine; by autocatalysis. Lysine 2271 carries the N6-acetyllysine modification. The segment at 2448–3228 is KIP-binding; sequence LDIIYKMMAK…DHSLSMDEER (781 aa). A Phosphothreonine modification is found at threonine 2547. Position 2621 is a phosphothreonine; by autocatalysis (threonine 2621). Residue serine 2624 is modified to Phosphoserine; by autocatalysis. 2 positions are modified to phosphothreonine; by autocatalysis: threonine 2650 and threonine 2659. Residues 2697-2729 form a disordered region; sequence AQKRNEKSQRAPLKSVGPDFGEKKLGLPGDKVD. A compositionally biased stretch (basic and acidic residues) spans 2716 to 2729; it reads FGEKKLGLPGDKVD. The interval 2753–2781 is may split the end of the DNA molecule, with the two strands separating around the region; sequence EKLSLIYARKGIAEQKREKEIKSELKMKH. Serine 2805 is subject to Phosphoserine. TPR repeat units follow at residues 2903 to 2935, 2936 to 2964, and 2965 to 2998; these read PVGV…VSPD, VVRW…SEIG, and TKQI…EEWV. Residues 2922 to 3555 form the FAT domain; that stretch reads PAKQFKGRMR…VYPFIISSES (634 aa). The residue at position 3221 (serine 3221) is a Phosphoserine. N6-acetyllysine is present on residues lysine 3257, lysine 3276, lysine 3654, and lysine 3658. The TPR 5 repeat unit spans residues 3711-3748; the sequence is LRNELEIPGQYDGKGKPLPEYHARIAGFDERIKVMASI. Positions 3738–4069 constitute a PI3K/PI4K catalytic domain; the sequence is FDERIKVMAS…IHYAKRKLAG (332 aa). The tract at residues 3744–3750 is G-loop; the sequence is VMASIRK. Serine 3747 and serine 3837 each carry phosphoserine. A catalytic loop region spans residues 3935–3943; sequence GIGDRHLNN. Residues 3955–3980 form an activation loop region; the sequence is GIDFGHAFGSATQFLPVPELMPFRLT. Serine 4042 carries the post-translational modification Phosphoserine. An FATC domain is found at 4112-4144; sequence NGLSEEAQVKCLIDQATDPNILGRTWIGWEPWM.

This sequence belongs to the PI3/PI4-kinase family. As to quaternary structure, DNA-PK is a heterotrimer of PRKDC and the Ku dimer (composed of XRCC6/Ku70 and XRCC5/Ku86). Formation of this complex may be promoted by interaction with ILF3. Component of the core long-range non-homologous end joining (NHEJ) complex (also named DNA-PK complex) composed of PRKDC, LIG4, XRCC4, XRCC6/Ku70, XRCC5/Ku86 and NHEJ1/XLF. Additional component of the NHEJ complex includes PAXX. Following autophosphorylation, PRKDC dissociates from DNA. Interacts with DNA-PKcs-interacting protein (KIP) with the region upstream the kinase domain. PRKDC alone also interacts with and phosphorylates DCLRE1C, thereby activating the latent endonuclease activity of this protein. Interacts with C1D. Interacts with TTI1 and TELO2. Interacts with CIB1. Interacts with SETX. Interacts with NR4A3; the DNA-dependent protein kinase complex DNA-PK phosphorylates and activates NR4A3 and prevents NR4A3 ubiquitination and degradation. Interacts with BRAT1. Part of the HDP-RNP complex composed of at least HEXIM1, PRKDC, XRCC5, XRCC6, paraspeckle proteins (SFPQ, NONO, PSPC1, RBM14, and MATR3) and NEAT1 RNA. Interacts with KAT5. In terms of processing, autophosphorylated at two clusters, the T2609 cluster and the S2056 cluster. Autophosphorylated on Ser-2069, Thr-2621, Thr-2650 and Thr-2659. Ser-2069 and Thr-2621 are DNA damage-inducible phosphorylation sites (inducible with ionizing radiation, IR) dephosphorylated by PPP5C. Autophosphorylation induces a conformational change that leads to remodeling of the DNA-PK complex, requisite for efficient end processing and DNA repair. Autophosphorylation in trans within DNA-PK complexes loaded on DNA ends leads to the dissociation of PRKDC from DNA and the transition into the short-range NHEJ complex. Autophosphorylation of the T2609 cluster is required for hematopoietic development and protein synthesis in erythrocytes precursors. Post-translationally, S-nitrosylated by GAPDH. Polyubiquitinated by RNF144A, leading to proteasomal degradation.

The protein localises to the nucleus. It localises to the nucleolus. Its subcellular location is the cytoplasm. It is found in the cytosol. It carries out the reaction L-seryl-[protein] + ATP = O-phospho-L-seryl-[protein] + ADP + H(+). The enzyme catalyses L-threonyl-[protein] + ATP = O-phospho-L-threonyl-[protein] + ADP + H(+). With respect to regulation, activity seems to be attenuated by autophosphorylation. Binding to the SL1 region of U3 small nucleolar RNA promotes auto-phosphorylation activity. Inhibited by wortmannin. Serine/threonine-protein kinase that acts as a molecular sensor for DNA damage. Involved in DNA non-homologous end joining (NHEJ) required for double-strand break (DSB) repair and V(D)J recombination. Must be bound to DNA to express its catalytic properties. Promotes processing of hairpin DNA structures in V(D)J recombination by activation of the hairpin endonuclease artemis (DCLRE1C). Recruited by XRCC5 and XRCC6 to DNA ends and is required to (1) protect and align broken ends of DNA, thereby preventing their degradation, (2) and sequester the DSB for repair by NHEJ. Acts as a scaffold protein to aid the localization of DNA repair proteins to the site of damage. The assembly of the DNA-PK complex at DNA ends is also required for the NHEJ ligation step. Found at the ends of chromosomes, suggesting a further role in the maintenance of telomeric stability and the prevention of chromosomal end fusion. Also involved in modulation of transcription. As part of the DNA-PK complex, involved in the early steps of ribosome assembly by promoting the processing of precursor rRNA into mature 18S rRNA in the small-subunit processome. Binding to U3 small nucleolar RNA, recruits PRKDC and XRCC5/Ku86 to the small-subunit processome. Recognizes the substrate consensus sequence [ST]-Q. Phosphorylates 'Ser-139' of histone variant H2AX, thereby regulating DNA damage response mechanism. Phosphorylates ASF1A, DCLRE1C, c-Abl/ABL1, histone H1, HSPCA, c-jun/JUN, p53/TP53, PARP1, POU2F1, DHX9, FH, SRF, NHEJ1/XLF, XRCC1, XRCC4, XRCC5, XRCC6, WRN, MYC and RFA2. Can phosphorylate C1D not only in the presence of linear DNA but also in the presence of supercoiled DNA. Ability to phosphorylate p53/TP53 in the presence of supercoiled DNA is dependent on C1D. Acts as a regulator of the phosphatidylinositol 3-kinase/protein kinase B signal transduction by mediating phosphorylation of 'Ser-473' of protein kinase B (PKB/AKT1, PKB/AKT2, PKB/AKT3), promoting their activation. Contributes to the determination of the circadian period length by antagonizing phosphorylation of CRY1 'Ser-588' and increasing CRY1 protein stability, most likely through an indirect mechanism. Plays a role in the regulation of DNA virus-mediated innate immune response by assembling into the HDP-RNP complex, a complex that serves as a platform for IRF3 phosphorylation and subsequent innate immune response activation through the cGAS-STING pathway. Also regulates the cGAS-STING pathway by catalyzing phosphorylation of CGAS, thereby impairing CGAS oligomerization and activation. Also regulates the cGAS-STING pathway by mediating phosphorylation of PARP1. This chain is DNA-dependent protein kinase catalytic subunit (PRKDC), found in Canis lupus familiaris (Dog).